Here is a 335-residue protein sequence, read N- to C-terminus: Cathepsin B (335 aa).

Residues 1–19 form the signal peptide; that stretch reads MWQLLATLSCLLVLTSARS. Positions 20–79 are cleaved as a propeptide — activation peptide; the sequence is SLHFPPLSDEMVNYVNKQNTTWKAGHNFYNVDLSYVKKLCGAILGGPKLPQRDAFAADMV. Cystine bridges form between Cys-93/Cys-122, Cys-105/Cys-150, Cys-141/Cys-207, Cys-142/Cys-146, Cys-179/Cys-211, and Cys-187/Cys-198. The active site involves Cys-108. Residue Asn-192 is glycosylated (N-linked (GlcNAc...) asparagine). At Lys-220 the chain carries N6-acetyllysine. Residues His-278 and Asn-298 contribute to the active site. A propeptide spanning residues 333 to 335 is cleaved from the precursor; the sequence is HQH.

The protein belongs to the peptidase C1 family. As to quaternary structure, dimer of a heavy chain and a light chain cross-linked by a disulfide bond. Interacts with SRPX2. Directly interacts with SHKBP1.

The protein localises to the lysosome. Its subcellular location is the melanosome. It is found in the secreted. It localises to the extracellular space. The protein resides in the apical cell membrane. It catalyses the reaction Hydrolysis of proteins with broad specificity for peptide bonds. Preferentially cleaves -Arg-Arg-|-Xaa bonds in small molecule substrates (thus differing from cathepsin L). In addition to being an endopeptidase, shows peptidyl-dipeptidase activity, liberating C-terminal dipeptides.. Functionally, thiol protease which is believed to participate in intracellular degradation and turnover of proteins. Cleaves matrix extracellular phosphoglycoprotein MEPE. Involved in the solubilization of cross-linked TG/thyroglobulin in the thyroid follicle lumen. Has also been implicated in tumor invasion and metastasis. This Ovis aries (Sheep) protein is Cathepsin B (CTSB).